The chain runs to 320 residues: Cytochrome f (320 aa).

The first 35 residues, 1–35 (MQTRKTLSWIKEEITRSISVSLMIYIITGAYISNA), serve as a signal peptide directing secretion. The heme site is built by tyrosine 36, cysteine 56, cysteine 59, and histidine 60. Residues 286 to 306 (VQGLLFFLASVILAQIFLVLK) form a helical membrane-spanning segment.

It belongs to the cytochrome f family. The 4 large subunits of the cytochrome b6-f complex are cytochrome b6, subunit IV (17 kDa polypeptide, petD), cytochrome f and the Rieske protein, while the 4 small subunits are PetG, PetL, PetM and PetN. The complex functions as a dimer. It depends on heme as a cofactor.

Its subcellular location is the plastid. It is found in the chloroplast thylakoid membrane. In terms of biological role, component of the cytochrome b6-f complex, which mediates electron transfer between photosystem II (PSII) and photosystem I (PSI), cyclic electron flow around PSI, and state transitions. The sequence is that of Cytochrome f from Populus alba (White poplar).